Consider the following 255-residue polypeptide: Hemin import ATP-binding protein HmuV (255 aa).

Residues 2 to 238 (LRVENLHVRR…EPLKAVFGLE (237 aa)) form the ABC transporter domain. An ATP-binding site is contributed by 34–41 (GPNGAGKS).

It belongs to the ABC transporter superfamily. Heme (hemin) importer (TC 3.A.1.14.5) family. In terms of assembly, the complex is composed of two ATP-binding proteins (HmuV), two transmembrane proteins (HmuU) and a solute-binding protein (HmuT).

The protein resides in the cell inner membrane. In terms of biological role, part of the ABC transporter complex HmuTUV involved in hemin import. Responsible for energy coupling to the transport system. This is Hemin import ATP-binding protein HmuV from Pseudomonas fluorescens (strain ATCC BAA-477 / NRRL B-23932 / Pf-5).